Consider the following 999-residue polypeptide: Embryonic polarity protein dorsal (999 aa).

The segment at 1-44 is disordered; that stretch reads MFPNQNNGAAPGQGPAVDGQQSLNYNGLPAQQQQQLAQSTKNVR. The RHD domain occupies 47–342; that stretch reads PYVKITEQPA…TFWNLHRHLK (296 aa). Phosphoserine; by PKA is present on serine 312. 2 disordered regions span residues 389-424 and 670-851; these read FNHEESQQSEPALEQEQSVQQEQYTQEQSLQQEQYT and QARK…SVSG. A compositionally biased stretch (low complexity) spans 402 to 424; sequence EQEQSVQQEQYTQEQSLQQEQYT. The Nuclear export signal signature appears at 668-677; the sequence is NSQARKPETP. Residues 677–686 show a composition bias toward pro residues; the sequence is PMRPVPPVPP. Over residues 710-719 the composition is skewed to basic and acidic residues; that stretch reads KQDSNAENRS. Residues 720 to 734 show a composition bias toward polar residues; that stretch reads IEANTVQTKPSTGES. The Nuclear localization signal signature appears at 756 to 773; it reads KKPGFFSKLFSRRKSKPD. Low complexity-rich tracts occupy residues 819–829 and 836–851; these read SNPAPAKSSPV and SKLTKPVGRSVSSVSG.

In terms of assembly, interacts with tamo via the nuclear localization signal. Interacts with emb, a component of the nuclear export complex. As to expression, in unchallenged larvae, expression of both isoforms is seen in fat body and gut (isoform A is more abundant). After immune challenge levels of both isoforms are enhanced.

It localises to the cytoplasm. Its subcellular location is the nucleus. Functionally, embryonic developmental transcription factor. The lateral or ventral identity of a cell depends upon the concentration of this protein in its nucleus during the blastoderm stage. Acts as a morphogenetic transcription factor that specifically binds to the kappa-B-related consensus sequence 5'-GRGAAAANCC-3', located in the enhancer region of zygotic genes such as Zen, Twist, Snail and Decapentaplegic, promoting their expression. Part of a signaling pathway involving NF-kappa-B and Toll-related receptors, that functions in the apoptosis of unfit cells during cell competition. Mediates an immune response in larvae. May be part of a NF-kappa-B and Tollo signaling cascade that regulates development of the peripheral nervous system. The sequence is that of Embryonic polarity protein dorsal (dl) from Drosophila melanogaster (Fruit fly).